A 133-amino-acid chain; its full sequence is Mediator of RNA polymerase II transcription subunit 10 (133 aa).

It belongs to the Mediator complex subunit 10 family. As to quaternary structure, component of the Mediator complex. Interacts with MED4 and MED21.

It localises to the nucleus. Its function is as follows. Component of the Mediator complex, a coactivator involved in the regulated transcription of nearly all RNA polymerase II-dependent genes. Mediator functions as a bridge to convey information from gene-specific regulatory proteins to the basal RNA polymerase II transcription machinery. Mediator is recruited to promoters by direct interactions with regulatory proteins and serves as a scaffold for the assembly of a functional preinitiation complex with RNA polymerase II and the general transcription factors. Required for activated transcription of the MtnA, MtnB and MtnD genes. This chain is Mediator of RNA polymerase II transcription subunit 10 (MED10), found in Drosophila melanogaster (Fruit fly).